The following is a 510-amino-acid chain: MAFLLFFVFVTAAVLCFVVPAFLLLCTSVQRRRDVGQGGGRDWQKKKKLRLPPGSMGWPYVGETLQLYSQDPNVFFASKQKRYGEIFKTNLLGCPCVMLASPEAARFVLVSQARLFKPTYPPSKERMIGPSALFFHQGEYHLRLRRLVQAALAPDSLRALVPDVDAAVAATLAAWSGGHVASTFHAMKKLSFDVGVVTIFGGRLGRRHREELRTNYSVVERGYNCFPNRFPGTLYHKAIQARKRLRAILSEIVAERRARGGGGGGGGDDLLGGLMRSRDDGTAGAVALLTDDQIADNVVGVLFAAQDTTASVLTWILKYLHDSPKLLEAVKAEQMAIYVANEGGKRPLTWTQTRSMTLTHQVILESLRMASIISFTFREAVADVEYKGFLIPKGWKVMPLFRNIHHNPDYFQDPQKFDPSRFKVAPRPSTFLPFGSGVHACPGNELAKLEMLVLVHRLVTAYRWEIVGASDEVEYSPFPVPRGGLNAKLWKQEAEEDMYMAMGTITAAGA.

Residues 3-23 (FLLFFVFVTAAVLCFVVPAFL) form a helical membrane-spanning segment. Cys-441 contributes to the heme binding site.

Belongs to the cytochrome P450 family. It depends on heme as a cofactor.

The protein localises to the membrane. It carries out the reaction 2-cis-(+)-abscisate + reduced [NADPH--hemoprotein reductase] + O2 = (+)-8'-hydroxyabscisate + oxidized [NADPH--hemoprotein reductase] + H2O + H(+). The protein operates within plant hormone degradation; abscisic acid degradation. Its function is as follows. Involved in the oxidative degradation of abscisic acid. The polypeptide is Abscisic acid 8'-hydroxylase 2 (CYP707A6) (Oryza sativa subsp. japonica (Rice)).